We begin with the raw amino-acid sequence, 372 residues long: Queuine tRNA-ribosyltransferase (372 aa).

Residue aspartate 92 is the Proton acceptor of the active site. Residues 92 to 96 (DSGGY), aspartate 146, glutamine 188, and glycine 215 contribute to the substrate site. The interval 246 to 252 (GIGSLKE) is RNA binding. The active-site Nucleophile is aspartate 265. An RNA binding; important for wobble base 34 recognition region spans residues 270 to 274 (TRLGR). Zn(2+)-binding residues include cysteine 303, cysteine 305, cysteine 308, and histidine 334.

It belongs to the queuine tRNA-ribosyltransferase family. As to quaternary structure, homodimer. Within each dimer, one monomer is responsible for RNA recognition and catalysis, while the other monomer binds to the replacement base PreQ1. Zn(2+) serves as cofactor.

The enzyme catalyses 7-aminomethyl-7-carbaguanine + guanosine(34) in tRNA = 7-aminomethyl-7-carbaguanosine(34) in tRNA + guanine. The protein operates within tRNA modification; tRNA-queuosine biosynthesis. In terms of biological role, catalyzes the base-exchange of a guanine (G) residue with the queuine precursor 7-aminomethyl-7-deazaguanine (PreQ1) at position 34 (anticodon wobble position) in tRNAs with GU(N) anticodons (tRNA-Asp, -Asn, -His and -Tyr). Catalysis occurs through a double-displacement mechanism. The nucleophile active site attacks the C1' of nucleotide 34 to detach the guanine base from the RNA, forming a covalent enzyme-RNA intermediate. The proton acceptor active site deprotonates the incoming PreQ1, allowing a nucleophilic attack on the C1' of the ribose to form the product. After dissociation, two additional enzymatic reactions on the tRNA convert PreQ1 to queuine (Q), resulting in the hypermodified nucleoside queuosine (7-(((4,5-cis-dihydroxy-2-cyclopenten-1-yl)amino)methyl)-7-deazaguanosine). This Prochlorococcus marinus (strain AS9601) protein is Queuine tRNA-ribosyltransferase.